The chain runs to 146 residues: Flagellar assembly factor FliW (146 aa).

Belongs to the FliW family. As to quaternary structure, interacts with translational regulator CsrA and flagellin(s).

The protein localises to the cytoplasm. Functionally, acts as an anti-CsrA protein, binds CsrA and prevents it from repressing translation of its target genes, one of which is flagellin. Binds to flagellin and participates in the assembly of the flagellum. The protein is Flagellar assembly factor FliW of Shouchella clausii (strain KSM-K16) (Alkalihalobacillus clausii).